The primary structure comprises 154 residues: Ubiquitin-like protein 4A-A (154 aa).

The region spanning 1–76 (MILTVKPLQG…LNLVVRPAGE (76 aa)) is the Ubiquitin-like domain.

Component of the BAT3 complex.

It localises to the cytoplasm. The protein resides in the cytosol. In terms of biological role, component of the BAT3 complex, a multiprotein complex involved in the post-translational delivery of tail-anchored (TA) membrane proteins to the endoplasmic reticulum membrane. TA membrane proteins, also named type II transmembrane proteins, contain a single C-terminal transmembrane region. The sequence is that of Ubiquitin-like protein 4A-A (ubl4aa) from Salmo salar (Atlantic salmon).